A 175-amino-acid chain; its full sequence is MGRTIENKQKIVTELKSLLDDSEMAVVLDYKGLTIKEMSDLRSRLQTNKGICKVTKNSLMRKAIDGNSNWTDLESLLTGTNAFVLIKEDVGGAVKAIQSFQKETKKSETKGALFEGRLLSQSEIKEIASLPSREVLMAKIAGALNGVATKIAISINEVPSGLARSLKQHSEKSES.

Belongs to the universal ribosomal protein uL10 family. As to quaternary structure, part of the ribosomal stalk of the 50S ribosomal subunit. The N-terminus interacts with L11 and the large rRNA to form the base of the stalk. The C-terminus forms an elongated spine to which L12 dimers bind in a sequential fashion forming a multimeric L10(L12)X complex.

Its function is as follows. Forms part of the ribosomal stalk, playing a central role in the interaction of the ribosome with GTP-bound translation factors. The protein is Large ribosomal subunit protein uL10 of Prochlorococcus marinus (strain MIT 9515).